A 251-amino-acid chain; its full sequence is 5'-nucleotidase SurE (251 aa).

Residues D8, D9, S39, and N91 each contribute to the a divalent metal cation site.

It belongs to the SurE nucleotidase family. The cofactor is a divalent metal cation.

The protein localises to the cytoplasm. It catalyses the reaction a ribonucleoside 5'-phosphate + H2O = a ribonucleoside + phosphate. In terms of biological role, nucleotidase that shows phosphatase activity on nucleoside 5'-monophosphates. The chain is 5'-nucleotidase SurE from Methylococcus capsulatus (strain ATCC 33009 / NCIMB 11132 / Bath).